Consider the following 88-residue polypeptide: Enticin (88 aa).

The signal sequence occupies residues 1-19 (MKTALPLLLLTCLVAAVQS). Cystine bridges form between C25-C33, C40-C52, and C59-C67. A propeptide spanning residues 69-88 (REQSQLNHDHLNNHTTTQQP) is cleaved from the precursor.

In terms of assembly, binds to attractin and temptin.

Its subcellular location is the secreted. In terms of biological role, a component of the complex of water-borne protein pheromones that stimulates attraction and mating behavior. This Aplysia californica (California sea hare) protein is Enticin.